Reading from the N-terminus, the 213-residue chain is 3-isopropylmalate dehydratase small subunit (213 aa).

Belongs to the LeuD family. LeuD type 1 subfamily. As to quaternary structure, heterodimer of LeuC and LeuD.

The enzyme catalyses (2R,3S)-3-isopropylmalate = (2S)-2-isopropylmalate. The protein operates within amino-acid biosynthesis; L-leucine biosynthesis; L-leucine from 3-methyl-2-oxobutanoate: step 2/4. Its function is as follows. Catalyzes the isomerization between 2-isopropylmalate and 3-isopropylmalate, via the formation of 2-isopropylmaleate. The chain is 3-isopropylmalate dehydratase small subunit from Pseudomonas syringae pv. tomato (strain ATCC BAA-871 / DC3000).